Here is a 1391-residue protein sequence, read N- to C-terminus: Eukaryotic translation initiation factor 3 subunit A (1391 aa).

One can recognise a PCI domain in the interval 315-498; sequence MQRMSTRVLL…RTLSFGSDLN (184 aa). Composition is skewed to basic and acidic residues over residues 809-921, 940-959, 966-1234, 1246-1257, 1265-1307, and 1313-1380; these read DKEE…RGGP, AALRKDEEQVSSRAFEEKVS, EKGG…RDQT, GWREREKAREDS, QAPE…ETPR, and DSDR…IKPE. Positions 809–1391 are disordered; it reads DKEEEEERLR…DEDGWTTVRR (583 aa). Tandem repeats lie at residues 973-982 and 983-992. Positions 973–1229 are 26 X 10 AA approximate tandem repeats of [DE]-[DE]-[DE]-R-[GATV]-[PS]-[KRW]-R-G-[AEFGIL]; that stretch reads DEDRGPKRGL…DDDRGPRRGE (257 aa). One copy of the 3; approximate repeat lies at 993–1001; that stretch reads DDAGPRRGF. A run of 20 repeats spans residues 1002–1011, 1012–1021, 1022–1031, 1032–1041, 1042–1051, 1052–1061, 1062–1071, 1072–1081, 1082–1091, 1092–1101, 1102–1111, 1112–1120, 1122–1131, 1132–1141, 1142–1151, 1152–1161, 1162–1171, 1172–1181, 1182–1191, and 1192–1201. A 24; approximate repeat occupies 1202 to 1209; the sequence is DDVPRRGA. 2 consecutive repeat copies span residues 1210–1219 and 1220–1229.

This sequence belongs to the eIF-3 subunit A family. Component of the eukaryotic translation initiation factor 3 (eIF-3) complex, which is composed of 13 subunits: eif3a, eif3b, eif3c, eif3d, eif3e, eif3f, eif3g, eif3h, eif3i, eif3j, eif3k, eif3l and eif3m.

It is found in the cytoplasm. Functionally, RNA-binding component of the eukaryotic translation initiation factor 3 (eIF-3) complex, which is involved in protein synthesis of a specialized repertoire of mRNAs and, together with other initiation factors, stimulates binding of mRNA and methionyl-tRNAi to the 40S ribosome. The eIF-3 complex specifically targets and initiates translation of a subset of mRNAs involved in cell proliferation. The protein is Eukaryotic translation initiation factor 3 subunit A (eif3a) of Xenopus tropicalis (Western clawed frog).